The following is a 131-amino-acid chain: Glycine cleavage system H protein (131 aa).

The 83-residue stretch at 24-106 (RVTVGISDHA…YGEGWIFVVE (83 aa)) folds into the Lipoyl-binding domain. An N6-lipoyllysine modification is found at lysine 65.

Belongs to the GcvH family. The glycine cleavage system is composed of four proteins: P, T, L and H. The cofactor is (R)-lipoate.

Its function is as follows. The glycine cleavage system catalyzes the degradation of glycine. The H protein shuttles the methylamine group of glycine from the P protein to the T protein. The polypeptide is Glycine cleavage system H protein (Xanthomonas euvesicatoria pv. vesicatoria (strain 85-10) (Xanthomonas campestris pv. vesicatoria)).